The sequence spans 163 residues: Large ribosomal subunit protein uL10 (163 aa).

This sequence belongs to the universal ribosomal protein uL10 family. In terms of assembly, part of the ribosomal stalk of the 50S ribosomal subunit. The N-terminus interacts with L11 and the large rRNA to form the base of the stalk. The C-terminus forms an elongated spine to which L12 dimers bind in a sequential fashion forming a multimeric L10(L12)X complex.

Forms part of the ribosomal stalk, playing a central role in the interaction of the ribosome with GTP-bound translation factors. The polypeptide is Large ribosomal subunit protein uL10 (Glaesserella parasuis serovar 5 (strain SH0165) (Haemophilus parasuis)).